The primary structure comprises 266 residues: Chymotrypsin-like elastase family member 1 (266 aa).

Positions 1 to 16 (MLRFLVFASLVLYGHS) are cleaved as a signal peptide. The propeptide at 17 to 26 (TQDFPETNAR) is activation peptide. The 238-residue stretch at 27-264 (VVGGAEARRN…YISWMNNVIA (238 aa)) folds into the Peptidase S1 domain. A disulfide bridge connects residues Cys56 and Cys72. His71 acts as the Charge relay system in catalysis. Asp85, Asn87, Gln90, and Glu95 together coordinate Ca(2+). The active-site Charge relay system is the Asp119. Intrachain disulfides connect Cys153–Cys220, Cys184–Cys200, and Cys210–Cys240. The active-site Charge relay system is the Ser214.

It belongs to the peptidase S1 family. Elastase subfamily. Requires Ca(2+) as cofactor. In terms of tissue distribution, pancreas.

It is found in the secreted. It catalyses the reaction Hydrolysis of proteins, including elastin. Preferential cleavage: Ala-|-Xaa.. Functionally, serine proteases that hydrolyze many proteins in addition to elastin. This is Chymotrypsin-like elastase family member 1 (Cela1) from Rattus norvegicus (Rat).